Reading from the N-terminus, the 141-residue chain is MLQLCSTFRPQLLLPCQFRFTNGVLIPQINYVASNSVVNIRPMIRCQRASGGRGGANRSKPAKPQVKEGSNKTVIEGLVTESLPNGMFRVDLENGDNILGYICGKIRKNFIRILPGDKVKVEMSVYDSTKGRIIFRMSSRD.

Residues 1–46 (MLQLCSTFRPQLLLPCQFRFTNGVLIPQINYVASNSVVNIRPMIRC) constitute a chloroplast transit peptide. Residues 49–69 (ASGGRGGANRSKPAKPQVKEG) are disordered. The S1-like domain occupies 63-138 (KPQVKEGSNK…TKGRIIFRMS (76 aa)).

It belongs to the IF-1 family. Component of the 30S ribosomal translation pre-initiation complex which assembles on the 30S ribosome in the order IF-2 and IF-3, IF-1 and N-formylmethionyl-tRNA(fMet); mRNA recruitment can occur at any time during PIC assembly.

The protein localises to the plastid. It is found in the chloroplast. One of the essential components for the initiation of protein synthesis. Stabilizes the binding of IF-2 and IF-3 on the 30S subunit to which N-formylmethionyl-tRNA(fMet) subsequently binds. Helps modulate mRNA selection, yielding the 30S pre-initiation complex (PIC). Upon addition of the 50S ribosomal subunit IF-1, IF-2 and IF-3 are released leaving the mature 70S translation initiation complex. The protein is Translation initiation factor IF-1, chloroplastic of Arabidopsis thaliana (Mouse-ear cress).